The primary structure comprises 94 residues: Aspartyl/glutamyl-tRNA(Asn/Gln) amidotransferase subunit C (94 aa).

This sequence belongs to the GatC family. As to quaternary structure, heterotrimer of A, B and C subunits.

The enzyme catalyses L-glutamyl-tRNA(Gln) + L-glutamine + ATP + H2O = L-glutaminyl-tRNA(Gln) + L-glutamate + ADP + phosphate + H(+). The catalysed reaction is L-aspartyl-tRNA(Asn) + L-glutamine + ATP + H2O = L-asparaginyl-tRNA(Asn) + L-glutamate + ADP + phosphate + 2 H(+). In terms of biological role, allows the formation of correctly charged Asn-tRNA(Asn) or Gln-tRNA(Gln) through the transamidation of misacylated Asp-tRNA(Asn) or Glu-tRNA(Gln) in organisms which lack either or both of asparaginyl-tRNA or glutaminyl-tRNA synthetases. The reaction takes place in the presence of glutamine and ATP through an activated phospho-Asp-tRNA(Asn) or phospho-Glu-tRNA(Gln). The sequence is that of Aspartyl/glutamyl-tRNA(Asn/Gln) amidotransferase subunit C from Opitutus terrae (strain DSM 11246 / JCM 15787 / PB90-1).